A 101-amino-acid polypeptide reads, in one-letter code: Small ribosomal subunit protein uS14 (101 aa).

This sequence belongs to the universal ribosomal protein uS14 family. As to quaternary structure, part of the 30S ribosomal subunit. Contacts proteins S3 and S10.

Binds 16S rRNA, required for the assembly of 30S particles and may also be responsible for determining the conformation of the 16S rRNA at the A site. This chain is Small ribosomal subunit protein uS14, found in Pseudomonas aeruginosa (strain LESB58).